Reading from the N-terminus, the 151-residue chain is Large ribosomal subunit protein bL9 (151 aa).

It belongs to the bacterial ribosomal protein bL9 family.

In terms of biological role, binds to the 23S rRNA. The sequence is that of Large ribosomal subunit protein bL9 from Bordetella pertussis (strain Tohama I / ATCC BAA-589 / NCTC 13251).